The sequence spans 474 residues: PRAME family member 8 (474 aa).

Residues 97 to 122 (QSKLQVLDLRNVDENFCDIFSGATAS) form an LRR 1; degenerate repeat. An LRR 2; degenerate repeat occupies 177-201 (HVCCKELQVFGMPIHSIIEVLNMVE). An LRR 3; degenerate repeat occupies 202-228 (LDCIQEVEVCCPWELSTLVKFAPYLGQ). The stretch at 229–264 (MRNLRKLVLFNIRASACIPPDNKGQFIARFTSQFLK) is one LRR 4; degenerate repeat. 5 LRR repeats span residues 265–290 (LDYFQNLSMHSVSFLEGHLDQLLRCL), 291–322 (QASLEMVVMTDCLLSESDLKHLSWCPSIRQLK), 323–341 (ELDLRGVTLTHFSPEPLTG), 347–374 (VATLQTLDLEDCGIMDSQLSAILPVLSR), and 375–399 (CSQLSTFSFCGNLISMAALENLLRH).

Belongs to the PRAME family.

This chain is PRAME family member 8, found in Homo sapiens (Human).